The sequence spans 103 residues: Putative defensin-like protein 305 (103 aa).

The signal sequence occupies residues 1 to 31 (MREEILEIFLLVNFVFILCTSIMVRIRYVSC). Intrachain disulfides connect cysteine 31–cysteine 51, cysteine 37–cysteine 56, and cysteine 42–cysteine 58.

It belongs to the DEFL family.

Its subcellular location is the secreted. This chain is Putative defensin-like protein 305, found in Arabidopsis thaliana (Mouse-ear cress).